The following is a 452-amino-acid chain: Pup--protein ligase (452 aa).

Mg(2+) is bound at residue Glu-9. Arg-53 contacts ATP. Mg(2+) is bound at residue Tyr-55. Residue Asp-57 is the Proton acceptor of the active site. Glu-63 contributes to the Mg(2+) binding site. Residues Thr-66 and Trp-419 each coordinate ATP.

The protein belongs to the Pup ligase/Pup deamidase family. Pup-conjugating enzyme subfamily.

It carries out the reaction ATP + [prokaryotic ubiquitin-like protein]-L-glutamate + [protein]-L-lysine = ADP + phosphate + N(6)-([prokaryotic ubiquitin-like protein]-gamma-L-glutamyl)-[protein]-L-lysine.. It participates in protein degradation; proteasomal Pup-dependent pathway. It functions in the pathway protein modification; protein pupylation. Catalyzes the covalent attachment of the prokaryotic ubiquitin-like protein modifier Pup to the proteasomal substrate proteins, thereby targeting them for proteasomal degradation. This tagging system is termed pupylation. The ligation reaction involves the side-chain carboxylate of the C-terminal glutamate of Pup and the side-chain amino group of a substrate lysine. The protein is Pup--protein ligase of Parafrankia sp. (strain EAN1pec).